A 218-amino-acid polypeptide reads, in one-letter code: Large ribosomal subunit protein uL4 (218 aa).

The segment at 46–102 (ARQGTHSTKTRGEVRGGGRKPFRQKGTGRARQGSIRAPHFTGGGISHGPKPRDYSQR) is disordered. Over residues 62 to 73 (GGRKPFRQKGTG) the composition is skewed to basic residues.

This sequence belongs to the universal ribosomal protein uL4 family. Part of the 50S ribosomal subunit.

In terms of biological role, one of the primary rRNA binding proteins, this protein initially binds near the 5'-end of the 23S rRNA. It is important during the early stages of 50S assembly. It makes multiple contacts with different domains of the 23S rRNA in the assembled 50S subunit and ribosome. Forms part of the polypeptide exit tunnel. The protein is Large ribosomal subunit protein uL4 of Corynebacterium glutamicum (strain R).